The following is a 421-amino-acid chain: C2H2 type master regulator of conidiophore development brlA (421 aa).

The segment covering 228 to 242 (THSPTTPLRSCSIGT) has biased composition (polar residues). Residues 228-247 (THSPTTPLRSCSIGTASGPD) form a disordered region. C2H2-type zinc fingers lie at residues 309–333 (FKCK…MKSH) and 339–364 (HVCW…TKTH). Positions 361–370 (TKTHSKRGGR) are enriched in basic residues. Positions 361 to 421 (TKTHSKRGGR…REYSVDGLDD (61 aa)) are disordered.

The protein resides in the nucleus. BrlA, abaA and wetA are pivotal regulators of conidiophore development and conidium maturation. They act individually and together to regulate their own expression and that of numerous other sporulation-specific genes. Binds promoters of target genes at brlA response elements (BREs) containing the conserved sequence 5'-(C/A)(A/G)AGGG(G/A)-3'. In Aspergillus parasiticus (strain ATCC 56775 / NRRL 5862 / SRRC 143 / SU-1), this protein is C2H2 type master regulator of conidiophore development brlA.